A 299-amino-acid chain; its full sequence is Xyloglucan endotransglucosylase protein 6 (299 aa).

An N-terminal signal peptide occupies residues 1–25 (MASSLTLPMAMAFTLLALSFASAMG). The region spanning 26-219 (GSMNSSRFDE…WSHAPFVASY (194 aa)) is the GH16 domain. Glu105 (nucleophile) is an active-site residue. The active-site Proton donor is the Glu109. Glu109 contacts xyloglucan. Asn113 carries N-linked (GlcNAc...) asparagine glycosylation. Xyloglucan contacts are provided by residues 122–124 (QTN), 132–134 (NRE), 198–199 (DW), and Gly203. Disulfide bonds link Cys227–Cys242 and Cys281–Cys294. Arg286 serves as a coordination point for xyloglucan.

Belongs to the glycosyl hydrolase 16 family. XTH group 1 subfamily. Post-translationally, contains at least one intrachain disulfide bond essential for its enzymatic activity. Highest expression in ripe leaves after full expansion. Also expressed in fruits, and at a lower level in flowers and stems (picked at anthesis).

The protein localises to the secreted. Its subcellular location is the cell wall. It localises to the extracellular space. The protein resides in the apoplast. It carries out the reaction breaks a beta-(1-&gt;4) bond in the backbone of a xyloglucan and transfers the xyloglucanyl segment on to O-4 of the non-reducing terminal glucose residue of an acceptor, which can be a xyloglucan or an oligosaccharide of xyloglucan.. Its function is as follows. Catalyzes xyloglucan endotransglycosylation (XET). Cleaves and religates xyloglucan polymers. Does not catalyze xyloglucan endohydrolysis (XEH). Probably involved in cell wall restructuring during postharvest fruit softening. In Diospyros kaki (Kaki persimmon), this protein is Xyloglucan endotransglucosylase protein 6.